The primary structure comprises 953 residues: Coatomer subunit beta (953 aa).

At Thr-2 the chain carries N-acetylthreonine. HEAT repeat units lie at residues 96–131 (HEMI…KEAE), 132–168 (LLEP…NFEH), 240–276 (SERA…SAPT), 277–314 (AIKA…HPAH), 316–353 (RVLQ…SRNV), and 396–433 (DMAA…RFDN). An N6-acetyllysine modification is found at Lys-494.

In terms of assembly, oligomeric complex that consists of at least the alpha, beta, beta', gamma, delta, epsilon and zeta subunits. Interacts with CAPN8. Interacts with SCYL1 and PRKCE. Interacts with COPG1. Interacts with ARF1 (myristoylated); this interaction is required for binding of COPB1 to Golgi membranes. Interacts (via trunk domain) with ARF1 (via switch I region); the interaction is direct. Interacts with KCNK2 (via N-terminus); this interaction increases the channel-mediated whole cell currents and promotes plasma membrane expression of KCNK2. Interacts with STX17. Interacts with TMEM115. Interacts with TMEM41B. In terms of processing, proteolytically cleaved between Ser-528 and Ser-529 by CAPN8. Predominantly expressed in the upper one-third of the oxyntic mucosa and in most regions of the pyloric mucosa. Ubiquitously expressed including platelet, liver, heart, spleen, lung and kidney.

The protein resides in the cytoplasm. The protein localises to the golgi apparatus membrane. Its subcellular location is the cytoplasmic vesicle. It localises to the COPI-coated vesicle membrane. It is found in the cell membrane. The protein resides in the endoplasmic reticulum-Golgi intermediate compartment. Functionally, the coatomer is a cytosolic protein complex that binds to dilysine motifs and reversibly associates with Golgi non-clathrin-coated vesicles, which further mediate biosynthetic protein transport from the ER, via the Golgi up to the trans Golgi network. Coatomer complex is required for budding from Golgi membranes, and is essential for the retrograde Golgi-to-ER transport of dilysine-tagged proteins. In mammals, the coatomer can only be recruited by membranes associated to ADP-ribosylation factors (ARFs), which are small GTP-binding proteins; the complex also influences the Golgi structural integrity, as well as the processing, activity, and endocytic recycling of LDL receptors. Involved in the Golgi disassembly and reassembly processes during cell cycle. Involved in autophagy by playing a role in early endosome function. Plays a role in organellar compartmentalization of secretory compartments including endoplasmic reticulum (ER)-Golgi intermediate compartment (ERGIC), Golgi, trans-Golgi network (TGN) and recycling endosomes, and in biosynthetic transport of CAV1. Plays a functional role in facilitating the transport of kappa-type opioid receptor mRNAs into axons and enhances translation of these proteins in cortical neurons. Required for limiting lipid storage in lipid droplets. Involved in lipid homeostasis by regulating the presence of perilipin family members PLIN2 and PLIN3 at the lipid droplet surface and promoting the association of adipocyte triglyceride lipase (PNPLA2) with the lipid droplet surface to mediate lipolysis. The polypeptide is Coatomer subunit beta (Copb1) (Mus musculus (Mouse)).